The following is a 389-amino-acid chain: MIVYGGGASEDGEGGGVVLKKGPWTVAEDETLAAYVREYGEGNWNSVQKKTWLARCGKSCRLRWANHLRPNLRKGSFTPEEERLIIQLHSQLGNKWARMAAQLPGRTDNEIKNYWNTRLKRFQRQGLPLYPPEYSQNNHQQQMYPQQPSSPLPSQTPASSFTFPLLQPPSLCPKRCYNTAFSPKASYISSPTNFLVSSPTFLHTHSSLSSYQSTNPVYSMKHELSSNQIPYSASLGVYQVSKFSDNGDCNQNLNTGLHTNTCQLLEDLMEEAEALADSFRAPKRRQIMAALEDNNNNNNFFSGGFGHRVSSNSLCSLQGLTPKEDESLQMNTMQDEDITKLLDWGSESEEISNGQSSVITTENNLVLDDHQFAFLFPVDDDTNNLPGIC.

HTH myb-type domains lie at 16–68 (GVVL…ANHL) and 69–123 (RPNL…KRFQ). DNA-binding regions (H-T-H motif) lie at residues 44-68 (WNSVQKKTWLARCGKSCRLRWANHL) and 96-119 (WARMAAQLPGRTDNEIKNYWNTRL). The interval 131-159 (PPEYSQNNHQQQMYPQQPSSPLPSQTPAS) is disordered. Low complexity predominate over residues 140 to 159 (QQQMYPQQPSSPLPSQTPAS).

Accumulates in pollen grains and pollen tube. Mostly expressed in mature pollen grains, and, to a lower extent, in inflorescences and siliques.

It localises to the nucleus. Its function is as follows. Transcription activator. Binds to 5'-CAACTGTC-3' and/or 5'-TAACAAA-3' motif in target gene promoter to promote their expression. Together with MYB101 and MYB120, functions as a male factor that controls pollen tube-synergid interaction in fertilization. Required for pollen tube growth arrest and sperm cell release in the female gametophyte, probably via the regulation of pollen tube-specific gene expression. In Arabidopsis thaliana (Mouse-ear cress), this protein is Transcription factor MYB97.